We begin with the raw amino-acid sequence, 70 residues long: Large ribosomal subunit protein bL31 (70 aa).

Lys-8 carries the post-translational modification N6-acetyllysine. The Zn(2+) site is built by Cys-16, Cys-18, Cys-37, and Cys-40.

The protein belongs to the bacterial ribosomal protein bL31 family. Type A subfamily. As to quaternary structure, part of the 50S ribosomal subunit. Zn(2+) serves as cofactor.

Functionally, binds the 23S rRNA. This is Large ribosomal subunit protein bL31 from Escherichia coli O6:K15:H31 (strain 536 / UPEC).